Here is an 82-residue protein sequence, read N- to C-terminus: Small ribosomal subunit protein bS18 (82 aa).

The interval 1–20 (MVDINQIPTRRPFHRRRKTC) is disordered.

This sequence belongs to the bacterial ribosomal protein bS18 family. As to quaternary structure, part of the 30S ribosomal subunit. Forms a tight heterodimer with protein bS6.

Functionally, binds as a heterodimer with protein bS6 to the central domain of the 16S rRNA, where it helps stabilize the platform of the 30S subunit. This chain is Small ribosomal subunit protein bS18, found in Brucella anthropi (strain ATCC 49188 / DSM 6882 / CCUG 24695 / JCM 21032 / LMG 3331 / NBRC 15819 / NCTC 12168 / Alc 37) (Ochrobactrum anthropi).